Reading from the N-terminus, the 31-residue chain is Photosystem II reaction center protein T (31 aa).

Residues 3–23 form a helical membrane-spanning segment; the sequence is SFAYILILGLAIATLFFAIAF.

The protein belongs to the PsbT family. As to quaternary structure, PSII is composed of 1 copy each of membrane proteins PsbA, PsbB, PsbC, PsbD, PsbE, PsbF, PsbH, PsbI, PsbJ, PsbK, PsbL, PsbM, PsbT, PsbX, PsbY, PsbZ, Psb30/Ycf12, peripheral proteins PsbO, CyanoQ (PsbQ), PsbU, PsbV and a large number of cofactors. It forms dimeric complexes.

It is found in the cellular thylakoid membrane. Its function is as follows. Found at the monomer-monomer interface of the photosystem II (PS II) dimer, plays a role in assembly and dimerization of PSII. PSII is a light-driven water plastoquinone oxidoreductase, using light energy to abstract electrons from H(2)O, generating a proton gradient subsequently used for ATP formation. The protein is Photosystem II reaction center protein T of Synechococcus sp. (strain CC9311).